A 165-amino-acid chain; its full sequence is Probable chemoreceptor glutamine deamidase CheD (165 aa).

Belongs to the CheD family.

The enzyme catalyses L-glutaminyl-[protein] + H2O = L-glutamyl-[protein] + NH4(+). Functionally, probably deamidates glutamine residues to glutamate on methyl-accepting chemotaxis receptors (MCPs), playing an important role in chemotaxis. The protein is Probable chemoreceptor glutamine deamidase CheD of Clostridium tetani (strain Massachusetts / E88).